A 663-amino-acid polypeptide reads, in one-letter code: UvrABC system protein B (663 aa).

One can recognise a Helicase ATP-binding domain in the interval 31-271; the sequence is DNIESGEKAQ…EQSISKIQAE (241 aa). ATP is bound at residue 44–51; it reads GATGTGKT. The Beta-hairpin signature appears at 97 to 120; sequence YYDYYQPEAYVPSSDTYIEKDSSV. Positions 435–601 constitute a Helicase C-terminal domain; sequence QMDDLLGEIN…TIKKDIRDLI (167 aa). The 36-residue stretch at 627 to 662 folds into the UVR domain; it reads QEAIKQLQKNMQEAAELLDFELAAQLRDLILELKAI.

The protein belongs to the UvrB family. In terms of assembly, forms a heterotetramer with UvrA during the search for lesions. Interacts with UvrC in an incision complex.

Its subcellular location is the cytoplasm. In terms of biological role, the UvrABC repair system catalyzes the recognition and processing of DNA lesions. A damage recognition complex composed of 2 UvrA and 2 UvrB subunits scans DNA for abnormalities. Upon binding of the UvrA(2)B(2) complex to a putative damaged site, the DNA wraps around one UvrB monomer. DNA wrap is dependent on ATP binding by UvrB and probably causes local melting of the DNA helix, facilitating insertion of UvrB beta-hairpin between the DNA strands. Then UvrB probes one DNA strand for the presence of a lesion. If a lesion is found the UvrA subunits dissociate and the UvrB-DNA preincision complex is formed. This complex is subsequently bound by UvrC and the second UvrB is released. If no lesion is found, the DNA wraps around the other UvrB subunit that will check the other stand for damage. This chain is UvrABC system protein B, found in Streptococcus equi subsp. zooepidemicus (strain MGCS10565).